Here is a 328-residue protein sequence, read N- to C-terminus: Carbonic anhydrase-related protein 11 (328 aa).

The first 22 residues, 1 to 22 (MGAAARLSAPRALVLWAALGAA), serve as a signal peptide directing secretion. The region spanning 33-303 (DWWSYKDNLQ…LAHRALRGNR (271 aa)) is the Alpha-carbonic anhydrase domain. N-linked (GlcNAc...) asparagine glycosylation is found at Asn118, Asn170, and Asn260. Positions 300–328 (RGNRDPRHPERRCRGPNYRLHVDGAPHGR) are disordered. Residues 319–328 (LHVDGAPHGR) show a composition bias toward basic and acidic residues.

The protein belongs to the alpha-carbonic anhydrase family.

The protein localises to the secreted. In terms of biological role, does not have a catalytic activity. The protein is Carbonic anhydrase-related protein 11 (CA11) of Bos taurus (Bovine).